Reading from the N-terminus, the 301-residue chain is D-alanine--D-alanine ligase A (301 aa).

One can recognise an ATP-grasp domain in the interval 96–290 (KKILRYEGVE…YSKLLDMIIE (195 aa)). 123-178 (LDKLGFPLVVKPNSGGSSVGVKIVYNKNELISMLETVFEWDSEVVIEKYIKGDEIT) is an ATP binding site. Residues Asp245, Glu257, and Asn259 each contribute to the Mg(2+) site.

This sequence belongs to the D-alanine--D-alanine ligase family. It depends on Mg(2+) as a cofactor. Mn(2+) is required as a cofactor.

Its subcellular location is the cytoplasm. The catalysed reaction is 2 D-alanine + ATP = D-alanyl-D-alanine + ADP + phosphate + H(+). It participates in cell wall biogenesis; peptidoglycan biosynthesis. Its function is as follows. Cell wall formation. This chain is D-alanine--D-alanine ligase A, found in Bacillus cereus (strain ATCC 14579 / DSM 31 / CCUG 7414 / JCM 2152 / NBRC 15305 / NCIMB 9373 / NCTC 2599 / NRRL B-3711).